We begin with the raw amino-acid sequence, 237 residues long: MEKLEMIYEGKGKKMWSVKGHDDLLIAEFKDDLTAFNAEKKGSESGKGALNNKISTALFKLLKSKGIETALVDTINDTEQVVKKCKIIPLEVVVRNIATGSLSKRLAIKEGTVLPFTLVEFYYKDDALGDPLVNDEHCIIMDLVKSENDLDRLKHLGREINSILLPFFKEKGLKLVDFKIEFGVDKDGNILLADEISPDSCRFWDSVTNEKMDKDRFRQDLGSVKVAYEEVLRRILS.

Belongs to the SAICAR synthetase family.

The enzyme catalyses 5-amino-1-(5-phospho-D-ribosyl)imidazole-4-carboxylate + L-aspartate + ATP = (2S)-2-[5-amino-1-(5-phospho-beta-D-ribosyl)imidazole-4-carboxamido]succinate + ADP + phosphate + 2 H(+). It participates in purine metabolism; IMP biosynthesis via de novo pathway; 5-amino-1-(5-phospho-D-ribosyl)imidazole-4-carboxamide from 5-amino-1-(5-phospho-D-ribosyl)imidazole-4-carboxylate: step 1/2. The chain is Phosphoribosylaminoimidazole-succinocarboxamide synthase from Campylobacter fetus subsp. fetus (strain 82-40).